The following is a 356-amino-acid chain: Carbamoyl phosphate synthase small chain (356 aa).

The interval 1–160 is CPSase; that stretch reads MKGYLKLEDG…TKKPYRIAGI (160 aa). Residues Ser45, Gly211, and Gly213 each contribute to the L-glutamine site. One can recognise a Glutamine amidotransferase type-1 domain in the interval 163–350; sequence KLAFIDLGTK…MDIVMVYKRR (188 aa). Residue Cys238 is the Nucleophile of the active site. L-glutamine contacts are provided by Leu239, Gln242, Asn280, Gly282, and Tyr283. Residues His323 and Glu325 contribute to the active site.

This sequence belongs to the CarA family. As to quaternary structure, composed of two chains; the small (or glutamine) chain promotes the hydrolysis of glutamine to ammonia, which is used by the large (or ammonia) chain to synthesize carbamoyl phosphate. Tetramer of heterodimers (alpha,beta)4.

The catalysed reaction is hydrogencarbonate + L-glutamine + 2 ATP + H2O = carbamoyl phosphate + L-glutamate + 2 ADP + phosphate + 2 H(+). The enzyme catalyses L-glutamine + H2O = L-glutamate + NH4(+). Its pathway is amino-acid biosynthesis; L-arginine biosynthesis; carbamoyl phosphate from bicarbonate: step 1/1. The protein operates within pyrimidine metabolism; UMP biosynthesis via de novo pathway; (S)-dihydroorotate from bicarbonate: step 1/3. Its function is as follows. Small subunit of the glutamine-dependent carbamoyl phosphate synthetase (CPSase). CPSase catalyzes the formation of carbamoyl phosphate from the ammonia moiety of glutamine, carbonate, and phosphate donated by ATP, constituting the first step of 2 biosynthetic pathways, one leading to arginine and/or urea and the other to pyrimidine nucleotides. The small subunit (glutamine amidotransferase) binds and cleaves glutamine to supply the large subunit with the substrate ammonia. This Caldanaerobacter subterraneus subsp. tengcongensis (strain DSM 15242 / JCM 11007 / NBRC 100824 / MB4) (Thermoanaerobacter tengcongensis) protein is Carbamoyl phosphate synthase small chain.